The sequence spans 832 residues: Protein P (832 aa).

The segment at 1–177 (MPLSCQHFRK…FCGSPYSWEQ (177 aa)) is terminal protein domain (TP). A spacer region spans residues 178 to 335 (ELQHGAEPFC…NCLSHIVNLL (158 aa)). The segment at 198–264 (SIGPAVPSQH…HNTASSSSSC (67 aa)) is disordered. Positions 336-679 (EDWGPCTEHG…YLTLYPVARQ (344 aa)) are polymerase/reverse transcriptase domain (RT). The Reverse transcriptase domain maps to 346–589 (EHLIRIPRTP…YSLHFMGYVI (244 aa)). Mg(2+) contacts are provided by Asp418, Asp540, and Asp541.

This sequence belongs to the hepadnaviridae P protein family.

The catalysed reaction is DNA(n) + a 2'-deoxyribonucleoside 5'-triphosphate = DNA(n+1) + diphosphate. It catalyses the reaction Endonucleolytic cleavage to 5'-phosphomonoester.. Activated by host HSP70 and HSP40 in vitro to be able to bind the epsilon loop of the pgRNA. Because deletion of the RNase H region renders the protein partly chaperone-independent, the chaperones may be needed indirectly to relieve occlusion of the RNA-binding site by this domain. Inhibited by several reverse-transcriptase inhibitors: Lamivudine, Adefovir and Entecavir. Multifunctional enzyme that converts the viral RNA genome into dsDNA in viral cytoplasmic capsids. This enzyme displays a DNA polymerase activity that can copy either DNA or RNA templates, and a ribonuclease H (RNase H) activity that cleaves the RNA strand of RNA-DNA heteroduplexes in a partially processive 3'- to 5'-endonucleasic mode. Neo-synthesized pregenomic RNA (pgRNA) are encapsidated together with the P protein, and reverse-transcribed inside the nucleocapsid. Initiation of reverse-transcription occurs first by binding the epsilon loop on the pgRNA genome, and is initiated by protein priming, thereby the 5'-end of (-)DNA is covalently linked to P protein. Partial (+)DNA is synthesized from the (-)DNA template and generates the relaxed circular DNA (RC-DNA) genome. After budding and infection, the RC-DNA migrates in the nucleus, and is converted into a plasmid-like covalently closed circular DNA (cccDNA). The activity of P protein does not seem to be necessary for cccDNA generation, and is presumably released from (+)DNA by host nuclear DNA repair machinery. This is Protein P from Pongo pygmaeus (Bornean orangutan).